The chain runs to 558 residues: Urocanate hydratase (558 aa).

Residues 50-51, glutamine 128, 174-176, glutamate 194, arginine 199, 240-241, 261-265, 271-272, and tyrosine 320 each bind NAD(+); these read GG, GMG, NA, QTSAH, and YI. The active site involves cysteine 408. An NAD(+)-binding site is contributed by glycine 490.

It belongs to the urocanase family. It depends on NAD(+) as a cofactor.

It is found in the cytoplasm. It catalyses the reaction 4-imidazolone-5-propanoate = trans-urocanate + H2O. It participates in amino-acid degradation; L-histidine degradation into L-glutamate; N-formimidoyl-L-glutamate from L-histidine: step 2/3. Its function is as follows. Catalyzes the conversion of urocanate to 4-imidazolone-5-propionate. The sequence is that of Urocanate hydratase from Deinococcus radiodurans (strain ATCC 13939 / DSM 20539 / JCM 16871 / CCUG 27074 / LMG 4051 / NBRC 15346 / NCIMB 9279 / VKM B-1422 / R1).